The chain runs to 259 residues: MTAILLVRRQPVTPIFFNQQYPTLVDICARWQLIYDANAPFELRFESDSLTLHKRDEPKLDGILVDFVTGAVAHRRKFGGGRGQSIAKAVGLKQGVTPSVVDGTAGLGRDAFVLASLGCTVTMVERHPVVAALLEDGLRRAYQDAEIGDWMHERMQLFHGSSLEALSKLEQEVDVVYLDPMYPHRDKSALVKKEMRVFQSLVGADLDADGLLAPALALATKRVVVKRPDYAEDLDGVKPSMVIDTKKNRFDVYVKAAMK.

S-adenosyl-L-methionine is bound by residues 109-110, 125-126, 161-162, and Asp-179; these read RD, ER, and SS.

It belongs to the methyltransferase superfamily. RsmJ family.

Its subcellular location is the cytoplasm. The catalysed reaction is guanosine(1516) in 16S rRNA + S-adenosyl-L-methionine = N(2)-methylguanosine(1516) in 16S rRNA + S-adenosyl-L-homocysteine + H(+). Functionally, specifically methylates the guanosine in position 1516 of 16S rRNA. In Shewanella putrefaciens (strain CN-32 / ATCC BAA-453), this protein is Ribosomal RNA small subunit methyltransferase J.